A 491-amino-acid chain; its full sequence is MAVTSTAQACDLVIFGAKGDLARRKLLPSLYQLEKAGHIHPETRIIGVGRAEWDRDAYIKVVREALETFLKEPLDPALWTTLSNRLDFCNLDVEDTEGFKRLGTMLDQQNRTTINYFAMPPSTFGAICRGLGQAGLNKEPARVVMEKPLGTNLASSRVINNQVAEFFNECQVYRIDHYLGKETVLNLLALRFANSLFANNWDNRTIDHVQITVAEEVGIEGRWGYFDQAGQMRDMIQNHLLQILTMIAMSPPADLSTDRIRDEKVKVLRSLRRIDRSNVHEVTVRGQYTSGFVQGKKVPGYLEEEGANKTSNTETFVAIRVDIDDWRWSGVPFYLRTGKRLPSKCSEVVVYFKNPALNLFHDSYQQLPQNKLIIRLQPDEGVEIQILNKIPGLDHKHRLQTTKLDLSFSETFNQQHLADAYERLLLETMRGIQALFVRRDEVEEAWKWVDSIMDAWAMDNDSPKPYQAGTWGPVASVAMITRDGRSWNEVE.

NADP(+) is bound by residues R50, 92–93, and K147; that span reads DV. Residues H177, K181, E215, and D234 each contribute to the substrate site. H239 acts as the Proton acceptor in catalysis. 2 residues coordinate substrate: K339 and K344.

The protein belongs to the glucose-6-phosphate dehydrogenase family.

It carries out the reaction D-glucose 6-phosphate + NADP(+) = 6-phospho-D-glucono-1,5-lactone + NADPH + H(+). It functions in the pathway carbohydrate degradation; pentose phosphate pathway; D-ribulose 5-phosphate from D-glucose 6-phosphate (oxidative stage): step 1/3. Catalyzes the oxidation of glucose 6-phosphate to 6-phosphogluconolactone. The protein is Glucose-6-phosphate 1-dehydrogenase of Dickeya dadantii (strain 3937) (Erwinia chrysanthemi (strain 3937)).